A 90-amino-acid polypeptide reads, in one-letter code: Probable Fe(2+)-trafficking protein (90 aa).

The protein belongs to the Fe(2+)-trafficking protein family.

In terms of biological role, could be a mediator in iron transactions between iron acquisition and iron-requiring processes, such as synthesis and/or repair of Fe-S clusters in biosynthetic enzymes. The sequence is that of Probable Fe(2+)-trafficking protein from Actinobacillus succinogenes (strain ATCC 55618 / DSM 22257 / CCUG 43843 / 130Z).